Consider the following 569-residue polypeptide: 3-(3-hydroxy-phenyl)propionate/3-hydroxycinnamic acid hydroxylase (569 aa).

FAD contacts are provided by residues 8-37 (DVVIVGAGPAGLTLANILGLEGVRVLVVDE) and 273-283 (FREGRLMLAGD).

This sequence belongs to the PheA/TfdB FAD monooxygenase family. FAD is required as a cofactor.

The catalysed reaction is 3-(3-hydroxyphenyl)propanoate + NADH + O2 + H(+) = 3-(2,3-dihydroxyphenyl)propanoate + NAD(+) + H2O. It carries out the reaction (2E)-3-(3-hydroxyphenyl)prop-2-enoate + NADH + O2 + H(+) = (2E)-3-(2,3-dihydroxyphenyl)prop-2-enoate + NAD(+) + H2O. Its pathway is aromatic compound metabolism; 3-phenylpropanoate degradation. Catalyzes the insertion of one atom of molecular oxygen into position 2 of the phenyl ring of 3-(3-hydroxyphenyl)propionate (3-HPP) and hydroxycinnamic acid (3HCI). This is 3-(3-hydroxy-phenyl)propionate/3-hydroxycinnamic acid hydroxylase from Mycolicibacterium gilvum (strain PYR-GCK) (Mycobacterium gilvum (strain PYR-GCK)).